Reading from the N-terminus, the 123-residue chain is Protein HesB, heterocyst (123 aa).

The protein belongs to the HesB/IscA family.

Its function is as follows. May be required for efficient nitrogen fixation. The sequence is that of Protein HesB, heterocyst (hesB1) from Trichormus variabilis (strain ATCC 29413 / PCC 7937) (Anabaena variabilis).